The primary structure comprises 856 residues: Phosphatidylglycerol lysyltransferase (856 aa).

The next 13 membrane-spanning stretches (helical) occupy residues 7-27 (ALSI…IYQS), 51-71 (LFML…YDYV), 88-108 (VSWI…AGVG), 128-148 (IAWL…FVAA), 161-181 (PWLW…LAVS), 208-228 (SVVE…AMGI), 235-255 (VFGV…PGGF), 280-300 (IVLY…FFAA), 342-362 (SLSL…SLPI), 375-395 (ALLL…ILPI), 420-440 (FLKG…VLLV), 459-479 (IFAV…AGFI), and 501-521 (HATI…TVVY).

It belongs to the LPG synthase family.

Its subcellular location is the cell membrane. It catalyses the reaction L-lysyl-tRNA(Lys) + a 1,2-diacyl-sn-glycero-3-phospho-(1'-sn-glycerol) = a 1,2-diacyl-sn-glycero-3-phospho-1'-(3'-O-L-lysyl)-sn-glycerol + tRNA(Lys). Functionally, catalyzes the transfer of a lysyl group from L-lysyl-tRNA(Lys) to membrane-bound phosphatidylglycerol (PG), which produces lysylphosphatidylglycerol (LPG), one of the components of the bacterial membrane with a positive net charge. LPG synthesis contributes to the resistance to cationic antimicrobial peptides (CAMPs) and likely protects B.subtilis against its own CAMPs and against those produced by competiting microorganisms (bacteriocins). In fact, the modification of anionic phosphatidylglycerol with positively charged L-lysine results in repulsion of the peptides. The sequence is that of Phosphatidylglycerol lysyltransferase (mprF) from Bacillus subtilis (strain 168).